Reading from the N-terminus, the 156-residue chain is MLLPDWKIRKEILIEPFSEESLQPAGYDLRVGREAFVSGKLIDVEKEGKVVIPPREYALILTLERVKLPDDVMGDMKIRSSLAREGILGSFAWVDPGWDGNLTLMLYNASNEPVELKYGERFVQIVFIRLEDPPRNPYSGNYQGSTRLVFSKRKKL.

Residues 79 to 84 (RSSLAR), Asp95, Gln124, and Tyr138 each bind dCTP.

Belongs to the dCTP deaminase family. Homotrimer.

It carries out the reaction dCTP + H2O + H(+) = dUTP + NH4(+). Its pathway is pyrimidine metabolism; dUMP biosynthesis; dUMP from dCTP (dUTP route): step 1/2. Its function is as follows. Catalyzes the deamination of dCTP to dUTP. The polypeptide is dCTP deaminase (Pyrococcus horikoshii (strain ATCC 700860 / DSM 12428 / JCM 9974 / NBRC 100139 / OT-3)).